Here is a 70-residue protein sequence, read N- to C-terminus: Small ribosomal subunit protein bS21 (70 aa).

Belongs to the bacterial ribosomal protein bS21 family.

The polypeptide is Small ribosomal subunit protein bS21 (Campylobacter hominis (strain ATCC BAA-381 / DSM 21671 / CCUG 45161 / LMG 19568 / NCTC 13146 / CH001A)).